A 1373-amino-acid chain; its full sequence is DNA-directed RNA polymerase subunit beta (1373 aa).

This sequence belongs to the RNA polymerase beta chain family. As to quaternary structure, the RNAP catalytic core consists of 2 alpha, 1 beta, 1 beta' and 1 omega subunit. When a sigma factor is associated with the core the holoenzyme is formed, which can initiate transcription.

The enzyme catalyses RNA(n) + a ribonucleoside 5'-triphosphate = RNA(n+1) + diphosphate. Its function is as follows. DNA-dependent RNA polymerase catalyzes the transcription of DNA into RNA using the four ribonucleoside triphosphates as substrates. In Rickettsia conorii (strain ATCC VR-613 / Malish 7), this protein is DNA-directed RNA polymerase subunit beta.